The primary structure comprises 191 residues: UPF0398 protein LCABL_17010 (191 aa).

This sequence belongs to the UPF0398 family.

The sequence is that of UPF0398 protein LCABL_17010 from Lacticaseibacillus casei (strain BL23) (Lactobacillus casei).